The primary structure comprises 676 residues: UvrABC system protein B (676 aa).

One can recognise a Helicase ATP-binding domain in the interval 26 to 414 (EGLDAGLAHQ…SAGEIADQVV (389 aa)). Position 39–46 (39–46 (GVTGSGKT)) interacts with ATP. The Beta-hairpin motif lies at 92-115 (YYDYYQPEAYVPTTDTFIEKDASV). Residues 432–598 (QVDDLLSEIR…ALKRNIKDIM (167 aa)) enclose the Helicase C-terminal domain. One can recognise a UVR domain in the interval 636-671 (EKEISRLEAAMYQHAQDLEFELAAEKRDEIEKLRAQ).

The protein belongs to the UvrB family. Forms a heterotetramer with UvrA during the search for lesions. Interacts with UvrC in an incision complex.

It is found in the cytoplasm. Functionally, the UvrABC repair system catalyzes the recognition and processing of DNA lesions. A damage recognition complex composed of 2 UvrA and 2 UvrB subunits scans DNA for abnormalities. Upon binding of the UvrA(2)B(2) complex to a putative damaged site, the DNA wraps around one UvrB monomer. DNA wrap is dependent on ATP binding by UvrB and probably causes local melting of the DNA helix, facilitating insertion of UvrB beta-hairpin between the DNA strands. Then UvrB probes one DNA strand for the presence of a lesion. If a lesion is found the UvrA subunits dissociate and the UvrB-DNA preincision complex is formed. This complex is subsequently bound by UvrC and the second UvrB is released. If no lesion is found, the DNA wraps around the other UvrB subunit that will check the other stand for damage. The sequence is that of UvrABC system protein B from Vibrio parahaemolyticus serotype O3:K6 (strain RIMD 2210633).